The following is a 387-amino-acid chain: MNIHEYQAKELCREFGINVSNGALALSADEAVEVAKKLGGNVWAVKAQIHAGGRGLGGGVKIAKNLDEVKKYANQILGMTLVTKQTGPKGKLVRKIYIEQGCNIKKEFYVSLTFNRAKEQIGLIASASGGMGIEEVDKNLIKTLNIDPQIGLKAFHAYEVGDFLGFDKDLNNKFYKFLNGLYKLYIATDANLVEINPMVLTAEDEFFALDAKMGFDDAALFRHENIAAMRDLDEEESSEVEAKQYGLSYVKLDGDIGCMVNGAGLAMGTMDTITYCGGKSANFLDVGGGASAETVAKAFEIILRDKNVKSIFVNIFGGIVRCDRIAKGILEATKLTKVEIPVVVRLDGTNAKEAIELLKEANIENIYSAHDLEEGAKLAVKLVNGEK.

ATP is bound by residues lysine 46, 53-55 (GRG), glutamate 99, cysteine 102, and glutamate 107. Mg(2+) is bound by residues asparagine 196 and aspartate 210. Substrate contacts are provided by residues asparagine 261 and 318–320 (GIV).

This sequence belongs to the succinate/malate CoA ligase beta subunit family. In terms of assembly, heterotetramer of two alpha and two beta subunits. Mg(2+) serves as cofactor.

It catalyses the reaction succinate + ATP + CoA = succinyl-CoA + ADP + phosphate. The enzyme catalyses GTP + succinate + CoA = succinyl-CoA + GDP + phosphate. It functions in the pathway carbohydrate metabolism; tricarboxylic acid cycle; succinate from succinyl-CoA (ligase route): step 1/1. Succinyl-CoA synthetase functions in the citric acid cycle (TCA), coupling the hydrolysis of succinyl-CoA to the synthesis of either ATP or GTP and thus represents the only step of substrate-level phosphorylation in the TCA. The beta subunit provides nucleotide specificity of the enzyme and binds the substrate succinate, while the binding sites for coenzyme A and phosphate are found in the alpha subunit. The polypeptide is Succinate--CoA ligase [ADP-forming] subunit beta (Campylobacter hominis (strain ATCC BAA-381 / DSM 21671 / CCUG 45161 / LMG 19568 / NCTC 13146 / CH001A)).